The chain runs to 226 residues: Holliday junction branch migration complex subunit RuvA (226 aa).

Residues 1-67 (MITSVYAKIE…AINKELYAFK (67 aa)) are domain I. The segment at 68–145 (SLKEKEWFKA…YLKNQIVVSD (78 aa)) is domain II. The flexible linker stretch occupies residues 146-167 (KVEPQIDDDEKIDDSKDLNDDE). The tract at residues 168-226 (LLSEIVIEAIDCLISLGYKQEQIKTALAEIDLKNESINDSADLVAVIIKQIGLRTSEVS) is domain III.

This sequence belongs to the RuvA family. In terms of assembly, homotetramer. Forms an RuvA(8)-RuvB(12)-Holliday junction (HJ) complex. HJ DNA is sandwiched between 2 RuvA tetramers; dsDNA enters through RuvA and exits via RuvB. An RuvB hexamer assembles on each DNA strand where it exits the tetramer. Each RuvB hexamer is contacted by two RuvA subunits (via domain III) on 2 adjacent RuvB subunits; this complex drives branch migration. In the full resolvosome a probable DNA-RuvA(4)-RuvB(12)-RuvC(2) complex forms which resolves the HJ.

It is found in the cytoplasm. Functionally, the RuvA-RuvB-RuvC complex processes Holliday junction (HJ) DNA during genetic recombination and DNA repair, while the RuvA-RuvB complex plays an important role in the rescue of blocked DNA replication forks via replication fork reversal (RFR). RuvA specifically binds to HJ cruciform DNA, conferring on it an open structure. The RuvB hexamer acts as an ATP-dependent pump, pulling dsDNA into and through the RuvAB complex. HJ branch migration allows RuvC to scan DNA until it finds its consensus sequence, where it cleaves and resolves the cruciform DNA. This chain is Holliday junction branch migration complex subunit RuvA, found in Mycoplasmoides gallisepticum (strain R(low / passage 15 / clone 2)) (Mycoplasma gallisepticum).